Here is a 72-residue protein sequence, read N- to C-terminus: Large ribosomal subunit protein bL31 (72 aa).

This sequence belongs to the bacterial ribosomal protein bL31 family. Type A subfamily. As to quaternary structure, part of the 50S ribosomal subunit.

In terms of biological role, binds the 23S rRNA. The polypeptide is Large ribosomal subunit protein bL31 (Deinococcus deserti (strain DSM 17065 / CIP 109153 / LMG 22923 / VCD115)).